The chain runs to 318 residues: Aspartate carbamoyltransferase catalytic subunit (318 aa).

R54 and T55 together coordinate carbamoyl phosphate. K82 contributes to the L-aspartate binding site. Positions 104, 134, and 137 each coordinate carbamoyl phosphate. Positions 174 and 230 each coordinate L-aspartate. Carbamoyl phosphate contacts are provided by G271 and P272.

This sequence belongs to the aspartate/ornithine carbamoyltransferase superfamily. ATCase family. Heterododecamer (2C3:3R2) of six catalytic PyrB chains organized as two trimers (C3), and six regulatory PyrI chains organized as three dimers (R2).

It catalyses the reaction carbamoyl phosphate + L-aspartate = N-carbamoyl-L-aspartate + phosphate + H(+). It participates in pyrimidine metabolism; UMP biosynthesis via de novo pathway; (S)-dihydroorotate from bicarbonate: step 2/3. Functionally, catalyzes the condensation of carbamoyl phosphate and aspartate to form carbamoyl aspartate and inorganic phosphate, the committed step in the de novo pyrimidine nucleotide biosynthesis pathway. The sequence is that of Aspartate carbamoyltransferase catalytic subunit from Clavibacter sepedonicus (Clavibacter michiganensis subsp. sepedonicus).